We begin with the raw amino-acid sequence, 270 residues long: Mevalonyl-coenzyme A hydratase sidH (270 aa).

The PTS1-type peroxisomal targeting signal motif lies at Ser268–Leu270.

It belongs to the enoyl-CoA hydratase/isomerase family.

Its subcellular location is the peroxisome. It participates in siderophore biosynthesis. Its function is as follows. Mevalonyl-coenzyme A hydratase; part of the siderophore biosynthetic pathway. Aspergillus fumigatus produces 4 types of siderophores, low-molecular-mass iron chelators, including excreted fusarinine C (FsC) and triacetylfusarinine C (TAFC) for iron uptake and intacellular ferricrocin (FC) for hyphal and hydroxyferricrocin (HFC) for conidial iron distribution and storage. TAFC consists of 3 N(2)-acetyl-N(5)-anhydromevalonyl-N(5)-hydroxyornithine residues cyclically linked by ester bonds; FC is a cyclic hexapeptide with the structure Gly-Ser-Gly-(N(5)-acetyl-N(5)-hydroxyornithine)x3. The biosynthesis of all four siderophores depends on the hydroxylation of ornithine, catalyzed by the monooxygenase sidA. Subsequently, the pathways for biosynthesis of extra- and intracellular siderophores split. For biosynthesis of extracellular siderophores, the transacylase sidF transfers anhydromevalonyl to N(5)-hydroxyornithine. The required anhydromevalonyl-CoA moiety is derived from mevalonate by CoA ligation and dehydration catalyzed by sidI and sidH respectively. The acetylation of N(5)-hydroxyornithine for FC biosynthesis involves the constitutively expressed sidL. FC is hydroxylated to HFC by an as yet uncharacterized enzyme during conidiation. Assembly of fusarinine C (FsC) and FC is catalyzed by two different nonribosomal peptide synthetases (NRPS), sidD and sidC respectively. Subsequently, sidG catalyzes N2-acetylation of FsC for forming TAFC. Both extra- and intracellular siderophores are crucial for growth during iron limitation and virulence. This chain is Mevalonyl-coenzyme A hydratase sidH, found in Aspergillus fumigatus (strain ATCC MYA-4609 / CBS 101355 / FGSC A1100 / Af293) (Neosartorya fumigata).